The following is a 239-amino-acid chain: Ribosomal RNA small subunit methyltransferase A (239 aa).

Asn-23, Ile-25, Gly-50, Glu-72, Asp-97, and Asn-116 together coordinate S-adenosyl-L-methionine.

It belongs to the class I-like SAM-binding methyltransferase superfamily. rRNA adenine N(6)-methyltransferase family. RsmA subfamily.

Its subcellular location is the cytoplasm. The catalysed reaction is adenosine(1518)/adenosine(1519) in 16S rRNA + 4 S-adenosyl-L-methionine = N(6)-dimethyladenosine(1518)/N(6)-dimethyladenosine(1519) in 16S rRNA + 4 S-adenosyl-L-homocysteine + 4 H(+). Specifically dimethylates two adjacent adenosines (A1518 and A1519) in the loop of a conserved hairpin near the 3'-end of 16S rRNA in the 30S particle. May play a critical role in biogenesis of 30S subunits. This chain is Ribosomal RNA small subunit methyltransferase A, found in Rickettsia felis (strain ATCC VR-1525 / URRWXCal2) (Rickettsia azadi).